We begin with the raw amino-acid sequence, 711 residues long: Polyribonucleotide nucleotidyltransferase (711 aa).

2 residues coordinate Mg(2+): Asp-494 and Asp-500. The 61-residue stretch at 560–620 (PKIEIFGVDP…INVENAKSDI (61 aa)) folds into the KH domain. An S1 motif domain is found at 651 to 710 (GEEFDGVVKKIMDFGAFISLKDGIDGLLHVSKIKTQLSEGDTLRVKVEEIKRGKISLELC).

Belongs to the polyribonucleotide nucleotidyltransferase family. Mg(2+) is required as a cofactor.

The protein localises to the cytoplasm. It carries out the reaction RNA(n+1) + phosphate = RNA(n) + a ribonucleoside 5'-diphosphate. In terms of biological role, involved in mRNA degradation. Catalyzes the phosphorolysis of single-stranded polyribonucleotides processively in the 3'- to 5'-direction. This is Polyribonucleotide nucleotidyltransferase from Campylobacter hominis (strain ATCC BAA-381 / DSM 21671 / CCUG 45161 / LMG 19568 / NCTC 13146 / CH001A).